Consider the following 845-residue polypeptide: Taste receptor type 1 member 3 (845 aa).

A signal peptide spans 1-18 (MAGLMLLSLMALLGLGAG). Residues 19-568 (APLCLSRQLR…FLAWGQPAVL (550 aa)) are Extracellular-facing. N-linked (GlcNAc...) asparagine glycans are attached at residues Asn128 and Asn262. The chain crosses the membrane as a helical span at residues 569–589 (VLLILLALALGLVLVALGLFI). Residues 590 to 601 (RHRDSPLVQASG) are Cytoplasmic-facing. The chain crosses the membrane as a helical span at residues 602–622 (GPRACFGLACLGLVCLSVLLF). The Extracellular segment spans residues 623-637 (PGQPGPASCLAQQPL). Residues 638-658 (LHLPLTGCLSTLFLQAAQIFV) form a helical membrane-spanning segment. The Cytoplasmic segment spans residues 659–680 (GSELPSSWADQLRRCLQGPWAW). A helical transmembrane segment spans residues 681-701 (LLVLLALLAEAALCAWYLVAF). Residues 702–727 (PPEVVTDWWVLPTQVLVHCRMRSWIS) lie on the Extracellular side of the membrane. The chain crosses the membrane as a helical span at residues 728–748 (FGLLHAINAMLAFLCFLGTFL). Topologically, residues 749–760 (VQSRPGRYNGAR) are cytoplasmic. The helical transmembrane segment at 761–781 (GLTFAMLAYFITWISFVPLFA) threads the bilayer. The Extracellular portion of the chain corresponds to 782–789 (NVHVAYQP). Residues 790–810 (TVQMAAILLCALGILATFHLP) traverse the membrane as a helical segment. Residues 811-845 (KCYLLLQQLELNNPEFFLGDDARGQGSSGSGGKET) are Cytoplasmic-facing.

Belongs to the G-protein coupled receptor 3 family. TAS1R subfamily. Forms homodimers or heterodimers with TAS1R1 and TAS1R2.

Its subcellular location is the cell membrane. Functionally, putative taste receptor. TAS1R1/TAS1R3 responds to the umami taste stimulus (the taste of monosodium glutamate). TAS1R2/TAS1R3 recognizes diverse natural and synthetic sweeteners. TAS1R3 is essential for the recognition and response to the disaccharide trehalose. Sequence differences within and between species can significantly influence the selectivity and specificity of taste responses. In Canis lupus familiaris (Dog), this protein is Taste receptor type 1 member 3 (TAS1R3).